We begin with the raw amino-acid sequence, 163 residues long: Small ribosomal subunit protein uS5 (163 aa).

The 64-residue stretch at 8–71 (FIEKVVSLNR…EQARKAMMKI (64 aa)) folds into the S5 DRBM domain.

It belongs to the universal ribosomal protein uS5 family. Part of the 30S ribosomal subunit. Contacts proteins S4 and S8.

Functionally, with S4 and S12 plays an important role in translational accuracy. Its function is as follows. Located at the back of the 30S subunit body where it stabilizes the conformation of the head with respect to the body. This Lawsonia intracellularis (strain PHE/MN1-00) protein is Small ribosomal subunit protein uS5.